The sequence spans 369 residues: uncharacterized protein (369 aa).

The segment covering 110 to 121 (ARPTDAFGAPIA) has biased composition (low complexity). The disordered stretch occupies residues 110 to 172 (ARPTDAFGAP…PPPPASGGGA (63 aa)). Positions 122–136 (PSEPTPASAPSPPKA) are enriched in pro residues.

This is an uncharacterized protein from Lymantria dispar multicapsid nuclear polyhedrosis virus (LdMNPV).